Here is a 79-residue protein sequence, read N- to C-terminus: MSEILPYSDEKMGHYGSDGDVGQISFSCRLQDTSSFFGGNQQKRPPKLGQIGRAKRVVIEDDRIDEVLKGVSDKSPSGV.

An inhibitory domain region spans residues 43–69 (KRPPKLGQIGRAKRVVIEDDRIDEVLK).

It belongs to the CAMK2N family.

The protein localises to the nucleus. It localises to the cytoplasm. Its subcellular location is the cytosol. Functionally, potent and specific cellular inhibitor of CaM-kinase II (CAMK2). Traps Ca(2+)/calmodulin on CAMK2. The chain is Calcium/calmodulin-dependent protein kinase II inhibitor 2 (camk2n2) from Xenopus tropicalis (Western clawed frog).